The following is a 247-amino-acid chain: Chymase (247 aa).

Residues 1 to 19 (MNLHALCLLLLLLGSSTKA) form the signal peptide. Positions 20–21 (GE) are cleaved as a propeptide — activation peptide. The region spanning 22–245 (IIGGTECIPH…YRPWINKILR (224 aa)) is the Peptidase S1 domain. The cysteines at positions 51 and 67 are disulfide-linked. Catalysis depends on His-66, which acts as the Charge relay system. The N-linked (GlcNAc...) asparagine glycan is linked to Asn-80. The active-site Charge relay system is the Asp-110. Cystine bridges form between Cys-144/Cys-209 and Cys-175/Cys-188. The Charge relay system role is filled by Ser-203.

It belongs to the peptidase S1 family. Granzyme subfamily. As to expression, mast cells.

It localises to the secreted. The protein resides in the cytoplasmic granule. It carries out the reaction Preferential cleavage: Phe-|-Xaa &gt; Tyr-|-Xaa &gt; Trp-|-Xaa &gt; Leu-|-Xaa.. Major secreted protease of mast cells with suspected roles in vasoactive peptide generation, extracellular matrix degradation, and regulation of gland secretion. This Rattus norvegicus (Rat) protein is Chymase (Cma1).